Reading from the N-terminus, the 284-residue chain is Bifunctional protein FolD (284 aa).

Residues 165–167, Ser-190, and Ile-231 contribute to the NADP(+) site; that span reads GAS.

It belongs to the tetrahydrofolate dehydrogenase/cyclohydrolase family. As to quaternary structure, homodimer.

The catalysed reaction is (6R)-5,10-methylene-5,6,7,8-tetrahydrofolate + NADP(+) = (6R)-5,10-methenyltetrahydrofolate + NADPH. The enzyme catalyses (6R)-5,10-methenyltetrahydrofolate + H2O = (6R)-10-formyltetrahydrofolate + H(+). It participates in one-carbon metabolism; tetrahydrofolate interconversion. Catalyzes the oxidation of 5,10-methylenetetrahydrofolate to 5,10-methenyltetrahydrofolate and then the hydrolysis of 5,10-methenyltetrahydrofolate to 10-formyltetrahydrofolate. This Bordetella avium (strain 197N) protein is Bifunctional protein FolD.